Consider the following 132-residue polypeptide: Glycine cleavage system H protein (132 aa).

The Lipoyl-binding domain maps to 24 to 106 (TVRVGLTDFA…YGAGWLLDVH (83 aa)). The residue at position 65 (Lys-65) is an N6-lipoyllysine.

This sequence belongs to the GcvH family. In terms of assembly, the glycine cleavage system is composed of four proteins: P, T, L and H. (R)-lipoate is required as a cofactor.

Functionally, the glycine cleavage system catalyzes the degradation of glycine. The H protein shuttles the methylamine group of glycine from the P protein to the T protein. The chain is Glycine cleavage system H protein from Mycobacterium leprae (strain Br4923).